A 103-amino-acid polypeptide reads, in one-letter code: uncharacterized protein (103 aa).

The N-terminal stretch at 1–21 is a signal peptide; that stretch reads MTGFKVSSFFYILALSRFFNA.

This is an uncharacterized protein from Saccharomyces cerevisiae (strain ATCC 204508 / S288c) (Baker's yeast).